Here is a 568-residue protein sequence, read N- to C-terminus: Type 3 secretion system secretin (568 aa).

Residues 1–15 (MAAALLLWTAGTVCA) form the signal peptide. The interval 203–292 (YGGDGPSDSG…RGSTPIIRAD (90 aa)) is disordered. A compositionally biased stretch (gly residues) spans 243 to 257 (LGGGKSPLPPGGTGQ). A compositionally biased stretch (basic and acidic residues) spans 273–284 (NRLRSDELDDRG).

Belongs to the bacterial secretin family. T3SS SctC subfamily. In terms of assembly, the core secretion machinery of the T3SS is composed of approximately 20 different proteins, including cytoplasmic components, a base, an export apparatus and a needle. This subunit is part of the base, which anchors the injectisome in the bacterial cell envelope. Forms a stable homooligomeric complex.

The protein resides in the cell outer membrane. In terms of biological role, component of the type III secretion system (T3SS), also called injectisome, which is used to inject bacterial effector proteins into eukaryotic host cells. Forms a ring-shaped multimeric structure with an apparent central pore in the outer membrane. In Ralstonia nicotianae (strain ATCC BAA-1114 / GMI1000) (Ralstonia solanacearum), this protein is Type 3 secretion system secretin.